A 206-amino-acid chain; its full sequence is Pyridoxine/pyridoxamine 5'-phosphate oxidase (206 aa).

FMN is bound by residues 53 to 58 (RMVLLK), 68 to 69 (YT), lysine 75, and glutamine 97. Lysine 58 lines the substrate pocket. Substrate contacts are provided by tyrosine 115, arginine 119, and serine 123. FMN-binding positions include 132–133 (QS) and tryptophan 177. Substrate is bound at residue 183–185 (RLH). Position 187 (arginine 187) interacts with FMN.

It belongs to the pyridoxamine 5'-phosphate oxidase family. In terms of assembly, homodimer. The cofactor is FMN.

It catalyses the reaction pyridoxamine 5'-phosphate + O2 + H2O = pyridoxal 5'-phosphate + H2O2 + NH4(+). It carries out the reaction pyridoxine 5'-phosphate + O2 = pyridoxal 5'-phosphate + H2O2. The protein operates within cofactor metabolism; pyridoxal 5'-phosphate salvage; pyridoxal 5'-phosphate from pyridoxamine 5'-phosphate: step 1/1. It functions in the pathway cofactor metabolism; pyridoxal 5'-phosphate salvage; pyridoxal 5'-phosphate from pyridoxine 5'-phosphate: step 1/1. Functionally, catalyzes the oxidation of either pyridoxine 5'-phosphate (PNP) or pyridoxamine 5'-phosphate (PMP) into pyridoxal 5'-phosphate (PLP). This Sinorhizobium fredii (strain NBRC 101917 / NGR234) protein is Pyridoxine/pyridoxamine 5'-phosphate oxidase.